A 250-amino-acid chain; its full sequence is tRNA (guanine-N(1)-)-methyltransferase (250 aa).

S-adenosyl-L-methionine-binding positions include Gly-116 and 136-141; that span reads IGDYVL.

It belongs to the RNA methyltransferase TrmD family. Homodimer.

Its subcellular location is the cytoplasm. It carries out the reaction guanosine(37) in tRNA + S-adenosyl-L-methionine = N(1)-methylguanosine(37) in tRNA + S-adenosyl-L-homocysteine + H(+). Functionally, specifically methylates guanosine-37 in various tRNAs. In Pseudomonas fluorescens (strain ATCC BAA-477 / NRRL B-23932 / Pf-5), this protein is tRNA (guanine-N(1)-)-methyltransferase.